The following is a 635-amino-acid chain: Probable clathrin assembly protein At4g32285 (635 aa).

The ENTH domain maps to 23–159 (VASNMAPDLE…ELALFERRGR (137 aa)). The interval 157-208 (RGRNGGGSSSSHQSNGDDGYNRSRDDFRSPPPRTYDYETGNGFGMPKRSRSF) is disordered. The span at 165-174 (SSSHQSNGDD) shows a compositional bias: low complexity. A compositionally biased stretch (basic and acidic residues) spans 175 to 184 (GYNRSRDDFR). Residue Ser-207 is modified to Phosphoserine. The residue at position 224 (Thr-224) is a Phosphothreonine. The segment covering 357-369 (AKRAKSPERKEIE) has biased composition (basic and acidic residues). A disordered region spans residues 357–412 (AKRAKSPERKEIEAPPAPAPPVEEPVDMNEIKALPPPENHTPPPPPAPEPKPQQPQ). The segment covering 390 to 409 (LPPPENHTPPPPPAPEPKPQ) has biased composition (pro residues).

Its subcellular location is the membrane. The protein localises to the clathrin-coated pit. It is found in the golgi apparatus. The protein resides in the cytoplasmic vesicle. It localises to the clathrin-coated vesicle. This chain is Probable clathrin assembly protein At4g32285, found in Arabidopsis thaliana (Mouse-ear cress).